Here is a 334-residue protein sequence, read N- to C-terminus: Phosphate acyltransferase (334 aa).

It belongs to the PlsX family. As to quaternary structure, homodimer. Probably interacts with PlsY.

It is found in the cytoplasm. The enzyme catalyses a fatty acyl-[ACP] + phosphate = an acyl phosphate + holo-[ACP]. Its pathway is lipid metabolism; phospholipid metabolism. Catalyzes the reversible formation of acyl-phosphate (acyl-PO(4)) from acyl-[acyl-carrier-protein] (acyl-ACP). This enzyme utilizes acyl-ACP as fatty acyl donor, but not acyl-CoA. This is Phosphate acyltransferase from Mycoplasmopsis agalactiae (strain NCTC 10123 / CIP 59.7 / PG2) (Mycoplasma agalactiae).